Here is a 1370-residue protein sequence, read N- to C-terminus: DNA-directed RNA polymerase subunit beta (1370 aa).

It belongs to the RNA polymerase beta chain family. In terms of assembly, the RNAP catalytic core consists of 2 alpha, 1 beta, 1 beta' and 1 omega subunit. When a sigma factor is associated with the core the holoenzyme is formed, which can initiate transcription.

It carries out the reaction RNA(n) + a ribonucleoside 5'-triphosphate = RNA(n+1) + diphosphate. In terms of biological role, DNA-dependent RNA polymerase catalyzes the transcription of DNA into RNA using the four ribonucleoside triphosphates as substrates. This chain is DNA-directed RNA polymerase subunit beta, found in Geobacter sulfurreducens (strain ATCC 51573 / DSM 12127 / PCA).